Here is a 749-residue protein sequence, read N- to C-terminus: Transcription factor RFX3 (749 aa).

Residues 183 to 258 (HLQWLLDNYE…YHYYGIRVKP (76 aa)) constitute a DNA-binding region (RFX-type winged-helix). The segment at 663 to 699 (VSPGNLDKDEGSEVESETDEDLDDSSEPRAKREKTEL) is disordered. The segment covering 674-687 (SEVESETDEDLDDS) has biased composition (acidic residues). Residues 688–698 (SEPRAKREKTE) are compositionally biased toward basic and acidic residues.

The protein belongs to the RFX family. As to quaternary structure, heterodimer; heterodimerizes with RFX1 and RFX2, and RFX6. Expressed in ciliated cells of the node and in the ciliated ependymal cells of the subcommissural organ (SCO), choroid plexuses (CP) and ventricular walls during embryonic and postnatal development. Expressed in developing and mature pancreatic endocrine cells during embryogenesis and in adults (at protein level).

It localises to the nucleus. Its function is as follows. Transcription factor required for ciliogenesis and islet cell differentiation during endocrine pancreas development. Essential for the differentiation of nodal monocilia and left-right asymmetry specification during embryogenesis. Required for the biogenesis of motile cilia by governing growth and beating efficiency of motile cells. Also required for ciliated ependymal cell differentiation. Together with RFX6, participates in the differentiation of 4 of the 5 islet cell types during endocrine pancreas development, with the exception of pancreatic PP (polypeptide-producing) cells. Regulates transcription by forming a heterodimer with another RFX protein and binding to the X-box in the promoter of target genes. Regulates the expression of genes involved in ciliary assembly (DYNC2LI1, FOXJ1 and BBS4) and genes involved in ciliary motility (DNAH11, DNAH9 and DNAH5). Represses transcription of MAP1A in non-neuronal cells but not in neuronal cells. This is Transcription factor RFX3 (Rfx3) from Mus musculus (Mouse).